Here is a 470-residue protein sequence, read N- to C-terminus: Angiopoietin-related protein 6 (470 aa).

The first 20 residues, 1–20, serve as a signal peptide directing secretion; it reads MGKPWLRALQLLLLLGASWA. N58 carries an N-linked (GlcNAc...) asparagine glycan. A coiled-coil region spans residues 59 to 116; sequence ASELAALRMRVGRHEELLRELQRLAAADGAVAGEVRALRKESRGLSARLGQLRAQLQH. A glycan (N-linked (GlcNAc...) (complex) asparagine) is linked at N145. Positions 214-249 are disordered; sequence SDTSRMLDPAPEPQRDQTQRQQEPMASPMPAGHPAV. In terms of domain architecture, Fibrinogen C-terminal spans 251 to 469; that stretch reads TKPVGPWQDC…KAAMLIRPLK (219 aa). 2 cysteine pairs are disulfide-bonded: C260-C287 and C410-C423.

Its subcellular location is the secreted. Its function is as follows. May play a role in the wound healing process. May promote epidermal proliferation, remodeling and regeneration. May promote the chemotactic activity of endothelial cells and induce neovascularization. May counteract high-fat diet-induced obesity and related insulin resistance through increased energy expenditure. This Homo sapiens (Human) protein is Angiopoietin-related protein 6 (ANGPTL6).